The primary structure comprises 909 residues: Nitrate reductase [NADH] (909 aa).

Position 187 (Cys-187) interacts with Mo-molybdopterin. One can recognise a Cytochrome b5 heme-binding domain in the interval 535–610; sequence SKMYSMSEVK…LEDFRIGELI (76 aa). His-570 and His-593 together coordinate heme. Residues 652-764 form the FAD-binding FR-type domain; sequence REKIPCKLVD…KGPLGHIEYQ (113 aa). FAD-binding positions include 704 to 707, 721 to 725, Phe-726, Phe-733, 738 to 740, and Thr-791; these read RAYT, VVKIY, and QMS.

This sequence belongs to the nitrate reductase family. In terms of assembly, homodimer. FAD is required as a cofactor. It depends on heme as a cofactor. Requires Mo-molybdopterin as cofactor.

The catalysed reaction is nitrite + NAD(+) + H2O = nitrate + NADH + H(+). Regulated by the nitrogen source and controlled by the circadian rhythm. Functionally, nitrate reductase is a key enzyme involved in the first step of nitrate assimilation in plants, fungi and bacteria. This chain is Nitrate reductase [NADH] (NIA), found in Petunia hybrida (Petunia).